The primary structure comprises 256 residues: Trypsin alpha (256 aa).

Residues 1–22 form the signal peptide; the sequence is MLKIVILLSAVVCALGGTVPEG. Positions 23 to 30 are cleaved as a propeptide — activation peptide; it reads LLPQLDGR. The 224-residue stretch at 31–254 folds into the Peptidase S1 domain; that stretch reads IVGGSATTIS…LRSWVISTAN (224 aa). A disulfide bridge connects residues Cys56 and Cys72. Residues His71 and Asp116 each act as charge relay system in the active site. Intrachain disulfides connect Cys180–Cys197 and Cys206–Cys230. Residue Ser210 is the Charge relay system of the active site.

This sequence belongs to the peptidase S1 family.

The protein resides in the secreted. Its subcellular location is the extracellular space. The catalysed reaction is Preferential cleavage: Arg-|-Xaa, Lys-|-Xaa.. In Drosophila erecta (Fruit fly), this protein is Trypsin alpha (alphaTry).